Here is a 266-residue protein sequence, read N- to C-terminus: 4-hydroxy-tetrahydrodipicolinate reductase (266 aa).

Position 10–15 (10–15 (GPRGRM)) interacts with NAD(+). An NADP(+)-binding site is contributed by K38. NAD(+) is bound by residues 99 to 101 (GTT) and 125 to 128 (APNF). The Proton donor/acceptor role is filled by H155. H156 is a binding site for (S)-2,3,4,5-tetrahydrodipicolinate. K159 functions as the Proton donor in the catalytic mechanism. Residue 165–166 (GT) coordinates (S)-2,3,4,5-tetrahydrodipicolinate.

Belongs to the DapB family.

It is found in the cytoplasm. The enzyme catalyses (S)-2,3,4,5-tetrahydrodipicolinate + NAD(+) + H2O = (2S,4S)-4-hydroxy-2,3,4,5-tetrahydrodipicolinate + NADH + H(+). The catalysed reaction is (S)-2,3,4,5-tetrahydrodipicolinate + NADP(+) + H2O = (2S,4S)-4-hydroxy-2,3,4,5-tetrahydrodipicolinate + NADPH + H(+). It functions in the pathway amino-acid biosynthesis; L-lysine biosynthesis via DAP pathway; (S)-tetrahydrodipicolinate from L-aspartate: step 4/4. Catalyzes the conversion of 4-hydroxy-tetrahydrodipicolinate (HTPA) to tetrahydrodipicolinate. This is 4-hydroxy-tetrahydrodipicolinate reductase from Bacillus cereus (strain Q1).